The primary structure comprises 193 residues: Phosphoheptose isomerase (193 aa).

In terms of domain architecture, SIS spans 37-193; that stretch reads LADSFKAGGK…QLIEKEMVKA (157 aa). Position 52-54 (52-54) interacts with substrate; that stretch reads NGG. Positions 61 and 65 each coordinate Zn(2+). Substrate is bound by residues glutamate 65, 93–94, 119–121, serine 124, and glutamine 172; these read ND and STS. Positions 172 and 180 each coordinate Zn(2+).

It belongs to the SIS family. GmhA subfamily. In terms of assembly, homotetramer. Zn(2+) serves as cofactor.

It localises to the cytoplasm. It catalyses the reaction 2 D-sedoheptulose 7-phosphate = D-glycero-alpha-D-manno-heptose 7-phosphate + D-glycero-beta-D-manno-heptose 7-phosphate. The protein operates within carbohydrate biosynthesis; D-glycero-D-manno-heptose 7-phosphate biosynthesis; D-glycero-alpha-D-manno-heptose 7-phosphate and D-glycero-beta-D-manno-heptose 7-phosphate from sedoheptulose 7-phosphate: step 1/1. Its function is as follows. Catalyzes the isomerization of sedoheptulose 7-phosphate in D-glycero-D-manno-heptose 7-phosphate. The polypeptide is Phosphoheptose isomerase (Yersinia pseudotuberculosis serotype O:1b (strain IP 31758)).